Reading from the N-terminus, the 275-residue chain is MNYNNPTQLQAAILDWAGTVVDFGSFAPTQIFVEAFAEFDVQVSIEEARGPMGMGKWDHIRTLCDQPQVAERYRKVFGRTPTDDDVTAIYNRFMPLQIEKIAEHSALIPGALETIANLRQQGIKIGSCSGYPKQVMDKVVALAATNGYVADHVVATDEVPNGRPWPAQALANVIALGIDDVAACVKIDDTVPGILEGRRAGMWTVALICSGNALGLDYEGYRALGSDALASERKRIHALFEGSRPHYMIDTITDLPEVIADINKRLANGEMPQSS.

Asp15 functions as the Nucleophile in the catalytic mechanism. Mg(2+)-binding residues include Asp15 and Ala17. The active-site Schiff-base intermediate with substrate is Lys56. Residue Asp189 participates in Mg(2+) binding.

It belongs to the HAD-like hydrolase superfamily. PhnX family. Homodimer. Mg(2+) serves as cofactor.

It carries out the reaction phosphonoacetaldehyde + H2O = acetaldehyde + phosphate + H(+). In terms of biological role, involved in phosphonate degradation. This Pseudomonas fluorescens (strain Pf0-1) protein is Phosphonoacetaldehyde hydrolase.